Consider the following 355-residue polypeptide: Phosphoribosylformylglycinamidine cyclo-ligase (355 aa).

The protein belongs to the AIR synthase family.

The protein localises to the cytoplasm. It catalyses the reaction 2-formamido-N(1)-(5-O-phospho-beta-D-ribosyl)acetamidine + ATP = 5-amino-1-(5-phospho-beta-D-ribosyl)imidazole + ADP + phosphate + H(+). The protein operates within purine metabolism; IMP biosynthesis via de novo pathway; 5-amino-1-(5-phospho-D-ribosyl)imidazole from N(2)-formyl-N(1)-(5-phospho-D-ribosyl)glycinamide: step 2/2. The sequence is that of Phosphoribosylformylglycinamidine cyclo-ligase from Methylobacterium nodulans (strain LMG 21967 / CNCM I-2342 / ORS 2060).